Here is a 364-residue protein sequence, read N- to C-terminus: Phosphoserine aminotransferase (364 aa).

R41 is a binding site for L-glutamate. Pyridoxal 5'-phosphate-binding positions include 75-76 (AS), W100, T155, D175, and Q198. Position 199 is an N6-(pyridoxal phosphate)lysine (K199). Residue 239–240 (NT) coordinates pyridoxal 5'-phosphate.

This sequence belongs to the class-V pyridoxal-phosphate-dependent aminotransferase family. SerC subfamily. Homodimer. It depends on pyridoxal 5'-phosphate as a cofactor.

It localises to the cytoplasm. The catalysed reaction is O-phospho-L-serine + 2-oxoglutarate = 3-phosphooxypyruvate + L-glutamate. It carries out the reaction 4-(phosphooxy)-L-threonine + 2-oxoglutarate = (R)-3-hydroxy-2-oxo-4-phosphooxybutanoate + L-glutamate. It participates in amino-acid biosynthesis; L-serine biosynthesis; L-serine from 3-phospho-D-glycerate: step 2/3. Its function is as follows. Catalyzes the reversible conversion of 3-phosphohydroxypyruvate to phosphoserine and of 3-hydroxy-2-oxo-4-phosphonooxybutanoate to phosphohydroxythreonine. The protein is Phosphoserine aminotransferase of Streptococcus uberis (strain ATCC BAA-854 / 0140J).